Consider the following 424-residue polypeptide: 3-isopropylmalate dehydratase large subunit (424 aa).

Positions 299, 359, and 362 each coordinate [4Fe-4S] cluster.

This sequence belongs to the aconitase/IPM isomerase family. LeuC type 2 subfamily. Heterodimer of LeuC and LeuD. [4Fe-4S] cluster is required as a cofactor.

It catalyses the reaction (2R,3S)-3-isopropylmalate = (2S)-2-isopropylmalate. It functions in the pathway amino-acid biosynthesis; L-leucine biosynthesis; L-leucine from 3-methyl-2-oxobutanoate: step 2/4. In terms of biological role, catalyzes the isomerization between 2-isopropylmalate and 3-isopropylmalate, via the formation of 2-isopropylmaleate. The sequence is that of 3-isopropylmalate dehydratase large subunit from Hydrogenobaculum sp. (strain Y04AAS1).